The sequence spans 418 residues: Zinc metalloproteinase nas-8 (418 aa).

The N-terminal stretch at 1–28 is a signal peptide; that stretch reads MMNRASLCRIAVLLCILHLSHLIDSTYA. The propeptide occupies 29–100; it reads QSYLTEKDFL…TSKLKSGVRR (72 aa). Residues 101–296 enclose the Peptidase M12A domain; sequence NGVTSVIKRW…LKINKLYNCP (196 aa). Disulfide bonds link cysteine 143/cysteine 295, cysteine 165/cysteine 184, cysteine 347/cysteine 381, cysteine 354/cysteine 374, and cysteine 361/cysteine 378. Histidine 192 contacts Zn(2+). The active site involves glutamate 193. Residues histidine 196 and histidine 202 each contribute to the Zn(2+) site. Positions 347–381 constitute a ShKT domain; sequence CSDRTNLCWRWLDRCRSYFFEKIMKEFCALSCGYC.

The cofactor is Zn(2+).

It localises to the secreted. The catalysed reaction is Hydrolysis of peptide bonds in substrates containing five or more amino acids, preferentially with Ala in P1', and Pro in P2'.. With respect to regulation, inhibited by ethylene glycol-bis(2-aminoethylether)-N,N,N,N-tetraacetic acid (EGTA), ethylenediaminetetraacetic acid (EDTA) and o-phenanthroline. Its function is as follows. Metalloprotease. The polypeptide is Zinc metalloproteinase nas-8 (Steinernema carpocapsae (Entomopathogenic nematode)).